Here is a 548-residue protein sequence, read N- to C-terminus: 5-epi-aristolochene synthase 1 (548 aa).

The Mg(2+) site is built by Asp-301, Asp-305, Asp-444, Thr-448, and Glu-452. Residues 301–305 (DDTFD) carry the DDXXD motif motif.

It belongs to the terpene synthase family. Monomer. The cofactor is Mg(2+). In terms of tissue distribution, expressed in roots, but not in shoots.

The protein localises to the cytoplasm. It catalyses the reaction (2E,6E)-farnesyl diphosphate = (+)-5-epi-aristolochene + diphosphate. It participates in secondary metabolite biosynthesis; terpenoid biosynthesis. Functionally, catalyzes the cyclization of trans,trans-farnesyl diphosphate (FPP) to the bicyclic intermediate 5-epi-aristolochene, initial step in the conversion of FPP to the sesquiterpenoid antifungal phytoalexin capsidiol. Produces germacrene A as an enzyme-bound intermediate that is not released by the enzyme, but is further cyclized to produce the bicyclic 5-epi-aristolochene. The protein is 5-epi-aristolochene synthase 1 (EAS) of Nicotiana attenuata (Coyote tobacco).